Consider the following 279-residue polypeptide: Large ribosomal subunit protein uL3 (279 aa).

Position 151 is an N5-methylglutamine (Gln-151).

This sequence belongs to the universal ribosomal protein uL3 family. In terms of assembly, part of the 50S ribosomal subunit. Forms a cluster with proteins L14 and L19. In terms of processing, methylated by PrmB.

Functionally, one of the primary rRNA binding proteins, it binds directly near the 3'-end of the 23S rRNA, where it nucleates assembly of the 50S subunit. This Dinoroseobacter shibae (strain DSM 16493 / NCIMB 14021 / DFL 12) protein is Large ribosomal subunit protein uL3.